The chain runs to 635 residues: Extracellular metalloproteinase 1 (635 aa).

A signal peptide spans 1-19 (MHGLLLAAGLLSLPLHVLA). The propeptide occupies 20–246 (HPQPSTSTSL…VHNVVDYVAH (227 aa)). N-linked (GlcNAc...) asparagine glycosylation occurs at Asn-287. His-430 is a binding site for Zn(2+). Glu-431 is an active-site residue. His-434 contributes to the Zn(2+) binding site. N-linked (GlcNAc...) asparagine glycosylation is found at Asn-475, Asn-594, and Asn-623.

It belongs to the peptidase M36 family. Zn(2+) serves as cofactor.

The protein resides in the secreted. In terms of biological role, secreted metalloproteinase probably acting as a virulence factor. The polypeptide is Extracellular metalloproteinase 1 (MEP1) (Arthroderma benhamiae (Trichophyton mentagrophytes)).